A 503-amino-acid chain; its full sequence is Glycoprotein 3-alpha-L-fucosyltransferase A (503 aa).

Residues 1-10 (MRRPKISLKK) lie on the Cytoplasmic side of the membrane. A helical; Signal-anchor for type II membrane protein membrane pass occupies residues 11 to 28 (YFYLTLICALLLIFGFSL). The Lumenal segment spans residues 29 to 503 (KEREIWKTLS…KDVISDSSDD (475 aa)). A disordered region spans residues 44–71 (ITTQQQQHQHLHQLQSMDEEHPMATSST). A compositionally biased stretch (low complexity) spans 47 to 58 (QQQQHQHLHQLQ). N-linked (GlcNAc...) asparagine glycans are attached at residues N262, N295, and N299.

Belongs to the glycosyltransferase 10 family. Requires Mn(2+) as cofactor.

The protein localises to the golgi apparatus. Its subcellular location is the golgi stack membrane. It catalyses the reaction N(4)-{beta-D-GlcNAc-(1-&gt;2)-alpha-D-Man-(1-&gt;3)-[beta-D-GlcNAc-(1-&gt;2)-alpha-D-Man-(1-&gt;6)]-beta-D-Man-(1-&gt;4)-beta-D-GlcNAc-(1-&gt;4)-beta-D-GlcNAc}-L-asparaginyl-[protein] + GDP-beta-L-fucose = N(4)-{beta-D-GlcNAc-(1-&gt;2)-alpha-D-Man-(1-&gt;3)-[beta-D-GlcNAc-(1-&gt;2)-alpha-D-Man-(1-&gt;6)]-beta-D-Man-(1-&gt;4)-beta-D-GlcNAc-(1-&gt;4)-[alpha-L-Fuc(1-&gt;3)]-beta-D-GlcNAc}-L-asparaginyl-[protein] + GDP + H(+). Its pathway is protein modification; protein glycosylation. Its function is as follows. Catalyzes alpha-1,3 glycosidic linkages of N-glycans. Plays a role in neuronal development by promoting ventral nerve cord formation, possibly by promoting interactions between migrating cells and the extracellular matrix or by promoting neural activity. The polypeptide is Glycoprotein 3-alpha-L-fucosyltransferase A (FucTA) (Drosophila melanogaster (Fruit fly)).